The chain runs to 185 residues: Elongation factor P (185 aa).

It belongs to the elongation factor P family.

Its subcellular location is the cytoplasm. It functions in the pathway protein biosynthesis; polypeptide chain elongation. In terms of biological role, involved in peptide bond synthesis. Stimulates efficient translation and peptide-bond synthesis on native or reconstituted 70S ribosomes in vitro. Probably functions indirectly by altering the affinity of the ribosome for aminoacyl-tRNA, thus increasing their reactivity as acceptors for peptidyl transferase. In Picosynechococcus sp. (strain ATCC 27264 / PCC 7002 / PR-6) (Agmenellum quadruplicatum), this protein is Elongation factor P.